The primary structure comprises 115 residues: Nucleoid-associated protein Npun_F0448 (115 aa).

Belongs to the YbaB/EbfC family. Homodimer.

It localises to the cytoplasm. It is found in the nucleoid. Its function is as follows. Binds to DNA and alters its conformation. May be involved in regulation of gene expression, nucleoid organization and DNA protection. This is Nucleoid-associated protein Npun_F0448 from Nostoc punctiforme (strain ATCC 29133 / PCC 73102).